Here is a 110-residue protein sequence, read N- to C-terminus: Large ribosomal subunit protein P1B (110 aa).

Low complexity predominate over residues 69–85; that stretch reads PAAGGAGAPAAAAGGEA. The disordered stretch occupies residues 69 to 110; sequence PAAGGAGAPAAAAGGEAAAEEQKEEAKEEEESDEDMGFGLFD. Acidic residues predominate over residues 95-104; sequence KEEEESDEDM.

The protein belongs to the eukaryotic ribosomal protein P1/P2 family. As to quaternary structure, component of the large ribosomal subunit (LSU). Mature yeast ribosomes consist of a small (40S) and a large (60S) subunit. The 40S small subunit contains 1 molecule of ribosomal RNA (18S rRNA) and at least 33 different proteins. The large 60S subunit contains 3 rRNA molecules (25S, 5.8S and 5S rRNA) and at least 46 different proteins. The acidic ribosomal P-proteins form the stalk structure of the 60S subunit. They are organized as a pentameric complex in which uL10/P0 interacts with 2 heterodimers of P1 and P2 proteins.

It localises to the cytoplasm. In terms of biological role, component of the ribosome, a large ribonucleoprotein complex responsible for the synthesis of proteins in the cell. The small ribosomal subunit (SSU) binds messenger RNAs (mRNAs) and translates the encoded message by selecting cognate aminoacyl-transfer RNA (tRNA) molecules. The large subunit (LSU) contains the ribosomal catalytic site termed the peptidyl transferase center (PTC), which catalyzes the formation of peptide bonds, thereby polymerizing the amino acids delivered by tRNAs into a polypeptide chain. The nascent polypeptides leave the ribosome through a tunnel in the LSU and interact with protein factors that function in enzymatic processing, targeting, and the membrane insertion of nascent chains at the exit of the ribosomal tunnel. This Schizosaccharomyces pombe (strain 972 / ATCC 24843) (Fission yeast) protein is Large ribosomal subunit protein P1B (rpp102).